A 143-amino-acid polypeptide reads, in one-letter code: uncharacterized protein (143 aa).

It is found in the mitochondrion. This is an uncharacterized protein from Arabidopsis thaliana (Mouse-ear cress).